The sequence spans 951 residues: Coiled-coil domain-containing protein 15 (951 aa).

Coiled coils occupy residues 64–89 (LIEE…QVKY), 154–193 (DGIE…VIKK), 782–813 (MDIE…EQEC), and 839–874 (LAQL…IQEK).

Interacts with POC5, POC1B, CETN2 and FAM161A.

The protein resides in the cytoplasm. It is found in the cytoskeleton. Its subcellular location is the microtubule organizing center. The protein localises to the centrosome. It localises to the centriole. The protein resides in the centriolar satellite. In terms of biological role, plays an important role in primary cilium assembly, maintenance, and length regulation. Interacts with centriole inner scaffold proteins to promote proper centriole size and integrity and assembly of functional cilia. Required for the recruitment of both the inner scaffold protein POC1B and the distal SFI1/CETN2 complex to centrioles. The protein is Coiled-coil domain-containing protein 15 (CCDC15) of Homo sapiens (Human).